The following is a 268-amino-acid chain: Shikimate dehydrogenase (NADP(+)) (268 aa).

Shikimate contacts are provided by residues 13–15 (SLS) and Thr60. The active-site Proton acceptor is the Lys64. Position 76 (Asp76) interacts with NADP(+). 2 residues coordinate shikimate: Asn85 and Asp100. Residues 124–128 (GAGGA), 148–153 (NRTMSR), and Ile209 each bind NADP(+). A shikimate-binding site is contributed by Tyr211. Residue Gly232 participates in NADP(+) binding.

This sequence belongs to the shikimate dehydrogenase family. Homodimer.

The enzyme catalyses shikimate + NADP(+) = 3-dehydroshikimate + NADPH + H(+). It functions in the pathway metabolic intermediate biosynthesis; chorismate biosynthesis; chorismate from D-erythrose 4-phosphate and phosphoenolpyruvate: step 4/7. Involved in the biosynthesis of the chorismate, which leads to the biosynthesis of aromatic amino acids. Catalyzes the reversible NADPH linked reduction of 3-dehydroshikimate (DHSA) to yield shikimate (SA). This Staphylococcus haemolyticus (strain JCSC1435) protein is Shikimate dehydrogenase (NADP(+)).